A 281-amino-acid chain; its full sequence is Putative dehydrogenase/reductase SDR family member 4-like 1 (281 aa).

36–60 serves as a coordination point for NADP(+); it reads LVTASTDWIGFAVAQRLAQDGAHVV. Serine 172 provides a ligand contact to substrate. Tyrosine 185 functions as the Proton acceptor in the catalytic mechanism. Lysine 189 contributes to the NADP(+) binding site. The Peroxisomal targeting signal signature appears at 279–281; it reads SRL.

The protein belongs to the short-chain dehydrogenases/reductases (SDR) family.

In terms of biological role, putative oxidoreductase. In Homo sapiens (Human), this protein is Putative dehydrogenase/reductase SDR family member 4-like 1.